Reading from the N-terminus, the 213-residue chain is ATP phosphoribosyltransferase (213 aa).

The protein belongs to the ATP phosphoribosyltransferase family. Short subfamily. As to quaternary structure, heteromultimer composed of HisG and HisZ subunits.

The protein localises to the cytoplasm. It carries out the reaction 1-(5-phospho-beta-D-ribosyl)-ATP + diphosphate = 5-phospho-alpha-D-ribose 1-diphosphate + ATP. It functions in the pathway amino-acid biosynthesis; L-histidine biosynthesis; L-histidine from 5-phospho-alpha-D-ribose 1-diphosphate: step 1/9. Its function is as follows. Catalyzes the condensation of ATP and 5-phosphoribose 1-diphosphate to form N'-(5'-phosphoribosyl)-ATP (PR-ATP). Has a crucial role in the pathway because the rate of histidine biosynthesis seems to be controlled primarily by regulation of HisG enzymatic activity. This chain is ATP phosphoribosyltransferase, found in Thermoanaerobacter pseudethanolicus (strain ATCC 33223 / 39E) (Clostridium thermohydrosulfuricum).